We begin with the raw amino-acid sequence, 492 residues long: Transmembrane protease serine 2 (492 aa).

Topologically, residues Met1–Ala84 are cytoplasmic. A helical; Signal-anchor for type II membrane protein transmembrane segment spans residues Leu85–Leu105. Topologically, residues Trp106 to Gly492 are extracellular. 9 disulfide bridges follow: Cys113-Cys126, Cys120-Cys139, Cys133-Cys148, Cys172-Cys231, Cys185-Cys241, Cys244-Cys365, Cys281-Cys297, Cys410-Cys426, and Cys437-Cys465. Residues Ile118–Cys148 enclose the LDL-receptor class A domain. 5 residues coordinate Ca(2+): Asn131, Asp134, Val136, Asp144, and Glu145. The region spanning Val149–Ile242 is the SRCR domain. N-linked (GlcNAc...) asparagine glycosylation is found at Asn213 and Asn249. Residues Ile256–Gly492 form the Peptidase S1 domain. Active-site charge relay system residues include His296 and Asp345. Residues Lys340–Arg470 form an HKU1-CoV S protein-binding region. Catalysis depends on Ser441, which acts as the Charge relay system.

This sequence belongs to the peptidase S1 family. As to quaternary structure, the catalytically active form interacts with ACE2. In terms of processing, proteolytically processed; by an autocatalytic mechanism. Autocleavage induces active conformation. In terms of tissue distribution, expressed in several tissues that comprise large populations of epithelial cells with the highest level of transcripts measured in the prostate gland. Expressed in type II pneumocytes in the lung (at protein level). Expressed strongly in small intestine. Also expressed in colon, stomach and salivary gland. Coexpressed with ACE2 within lung type II pneumocytes, ileal absorptive enterocytes, intestinal epithelial cells, cornea, gallbladder and nasal goblet secretory cells.

Its subcellular location is the cell membrane. The protein localises to the secreted. It carries out the reaction The enzyme cleaves angiotensin-converting enzyme 2 (EC 3.4.17.23) and cleaves influenzea A and B virus and coronavirus spike glycoproteins at arginine residues.. Functionally, plasma membrane-anchored serine protease that cleaves at arginine residues. Participates in proteolytic cascades of relevance for the normal physiologic function of the prostate. Androgen-induced TMPRSS2 activates several substrates that include pro-hepatocyte growth factor/HGF, the protease activated receptor-2/F2RL1 or matriptase/ST14 leading to extracellular matrix disruption and metastasis of prostate cancer cells. In addition, activates trigeminal neurons and contribute to both spontaneous pain and mechanical allodynia. In terms of biological role, (Microbial infection) Facilitates human coronaviruses SARS-CoV and SARS-CoV-2 infections via two independent mechanisms, proteolytic cleavage of ACE2 receptor which promotes viral uptake, and cleavage of coronavirus spike glycoproteins which activates the glycoprotein for host cell entry. The cleavage of SARS-COV2 spike glycoprotein occurs between the S2 and S2' site. Upon SARS-CoV-2 infection, increases syncytia formation by accelerating the fusion process. Proteolytically cleaves and activates the spike glycoproteins of human coronavirus 229E (HCoV-229E) and human coronavirus EMC (HCoV-EMC) and the fusion glycoproteins F0 of Sendai virus (SeV), human metapneumovirus (HMPV), human parainfluenza 1, 2, 3, 4a and 4b viruses (HPIV). Essential for spread and pathogenesis of influenza A virus (strains H1N1, H3N2 and H7N9); involved in proteolytic cleavage and activation of hemagglutinin (HA) protein which is essential for viral infectivity. Its function is as follows. (Microbial infection) Receptor for human coronavirus HKU1-CoV, acts synergistically with disialoside glycans to facilitate the entry of the virus. After binding to cell-surface disialoside glycans, the viral S protein interacts with the inactive form of TMPRSS2 and inhibits its protease activity. This chain is Transmembrane protease serine 2, found in Homo sapiens (Human).